A 308-amino-acid chain; its full sequence is Carbonic anhydrase 6 (308 aa).

A signal peptide spans 1–17 (MRALVLLLSLFLLGGQA). Residues 21–278 (SDWTYSEGAL…LNHRVVESNF (258 aa)) enclose the Alpha-carbonic anhydrase domain. An intrachain disulfide couples Cys-42 to Cys-224. Asn-67 carries an N-linked (GlcNAc...) asparagine glycan. His-85 functions as the Proton donor/acceptor in the catalytic mechanism. Positions 111, 113, and 138 each coordinate Zn(2+). 220–221 (TT) contacts substrate. An N-linked (GlcNAc...) asparagine glycan is attached at Asn-256.

Belongs to the alpha-carbonic anhydrase family. It depends on Zn(2+) as a cofactor. Major constituent of saliva.

Its subcellular location is the secreted. It catalyses the reaction hydrogencarbonate + H(+) = CO2 + H2O. Its activity is regulated as follows. Inhibited by coumarins, sulfonamide derivatives such as acetazolamide (AZA), saccharin and Foscarnet (phosphonoformate trisodium salt). Its function is as follows. Reversible hydration of carbon dioxide. Its role in saliva is unknown. This is Carbonic anhydrase 6 (CA6) from Homo sapiens (Human).